The chain runs to 252 residues: Imidazole glycerol phosphate synthase subunit HisF (252 aa).

Active-site residues include D11 and D130.

Belongs to the HisA/HisF family. Heterodimer of HisH and HisF.

The protein localises to the cytoplasm. It catalyses the reaction 5-[(5-phospho-1-deoxy-D-ribulos-1-ylimino)methylamino]-1-(5-phospho-beta-D-ribosyl)imidazole-4-carboxamide + L-glutamine = D-erythro-1-(imidazol-4-yl)glycerol 3-phosphate + 5-amino-1-(5-phospho-beta-D-ribosyl)imidazole-4-carboxamide + L-glutamate + H(+). It functions in the pathway amino-acid biosynthesis; L-histidine biosynthesis; L-histidine from 5-phospho-alpha-D-ribose 1-diphosphate: step 5/9. In terms of biological role, IGPS catalyzes the conversion of PRFAR and glutamine to IGP, AICAR and glutamate. The HisF subunit catalyzes the cyclization activity that produces IGP and AICAR from PRFAR using the ammonia provided by the HisH subunit. This Bacillus thuringiensis (strain Al Hakam) protein is Imidazole glycerol phosphate synthase subunit HisF.